The chain runs to 594 residues: Arrestin domain-containing protein C584.15c (594 aa).

The span at 368-398 (NPQLQSGFTTPNLSRRNSSDFGPNSPVNIHS) shows a compositional bias: polar residues. Disordered stretches follow at residues 368 to 417 (NPQL…NSNA) and 531 to 594 (EATR…RGVR). Low complexity predominate over residues 404 to 417 (SGQQPSSPASNSNA). Positions 534–552 (RPSSPTESVEIPSNTTTIA) are enriched in polar residues. Residues 565–574 (PSTPAPPLPS) show a composition bias toward pro residues. At Ser-584 the chain carries Phosphoserine.

This sequence belongs to the arrestin family.

The polypeptide is Arrestin domain-containing protein C584.15c (Schizosaccharomyces pombe (strain 972 / ATCC 24843) (Fission yeast)).